Here is a 247-residue protein sequence, read N- to C-terminus: Aspartate/glutamate leucyltransferase (247 aa).

Belongs to the R-transferase family. Bpt subfamily.

It localises to the cytoplasm. It carries out the reaction N-terminal L-glutamyl-[protein] + L-leucyl-tRNA(Leu) = N-terminal L-leucyl-L-glutamyl-[protein] + tRNA(Leu) + H(+). It catalyses the reaction N-terminal L-aspartyl-[protein] + L-leucyl-tRNA(Leu) = N-terminal L-leucyl-L-aspartyl-[protein] + tRNA(Leu) + H(+). Its function is as follows. Functions in the N-end rule pathway of protein degradation where it conjugates Leu from its aminoacyl-tRNA to the N-termini of proteins containing an N-terminal aspartate or glutamate. The chain is Aspartate/glutamate leucyltransferase from Dechloromonas aromatica (strain RCB).